We begin with the raw amino-acid sequence, 833 residues long: Leucine--tRNA ligase (833 aa).

The 'HIGH' region motif lies at 41-52 (PYPSGAGLHVGH). Residues 610 to 614 (KMSKS) carry the 'KMSKS' region motif. K613 provides a ligand contact to ATP.

Belongs to the class-I aminoacyl-tRNA synthetase family.

The protein localises to the cytoplasm. It catalyses the reaction tRNA(Leu) + L-leucine + ATP = L-leucyl-tRNA(Leu) + AMP + diphosphate. The protein is Leucine--tRNA ligase of Streptococcus pyogenes serotype M3 (strain ATCC BAA-595 / MGAS315).